Here is a 342-residue protein sequence, read N- to C-terminus: MAVRAAVAGASGYAGGELLRLLLTHPEVEIGALTGNSNAGQRLGALQPHLLPLADRVLEATTPEVLGGHDVVFLALPHGQSAAVAEQLGPDVLVVDMGADFRLKDAGDWERFYGSPHAGTWPYGLPELPGARAALEGSKRIAVPGCYPTAVSLALFPAYAASLAEPEAVIVAASGTSGAGKAAKPHLLGSEVMGSMSPYGVGGGHRHTPEMIQNLGAVAGEPVTVSFTPTLAPMPRGILATCTAKAKPGVTAESVRAAYEKALADEPFVHLLPEGQWPATASVYGSNAVQVQVAHDAAAGRIIAISAIDNLAKGTAGGAVQSMNLALGLDETTGLTTIGVAP.

The active site involves C146.

It belongs to the NAGSA dehydrogenase family. Type 1 subfamily.

It localises to the cytoplasm. The catalysed reaction is N-acetyl-L-glutamate 5-semialdehyde + phosphate + NADP(+) = N-acetyl-L-glutamyl 5-phosphate + NADPH + H(+). It participates in amino-acid biosynthesis; L-arginine biosynthesis; N(2)-acetyl-L-ornithine from L-glutamate: step 3/4. Functionally, catalyzes the NADPH-dependent reduction of N-acetyl-5-glutamyl phosphate to yield N-acetyl-L-glutamate 5-semialdehyde. The chain is N-acetyl-gamma-glutamyl-phosphate reductase from Streptomyces coelicolor (strain ATCC BAA-471 / A3(2) / M145).